We begin with the raw amino-acid sequence, 551 residues long: Chaperonin GroEL 4 (551 aa).

Residues 30-33 (TLGP), Lys-51, 87-91 (DGTTT), Gly-415, and Asp-495 each bind ATP.

The protein belongs to the chaperonin (HSP60) family. Forms a cylinder of 14 subunits composed of two heptameric rings stacked back-to-back. Interacts with the co-chaperonin GroES.

The protein resides in the cytoplasm. The enzyme catalyses ATP + H2O + a folded polypeptide = ADP + phosphate + an unfolded polypeptide.. Its function is as follows. Together with its co-chaperonin GroES, plays an essential role in assisting protein folding. The GroEL-GroES system forms a nano-cage that allows encapsulation of the non-native substrate proteins and provides a physical environment optimized to promote and accelerate protein folding. The protein is Chaperonin GroEL 4 of Mesorhizobium japonicum (strain LMG 29417 / CECT 9101 / MAFF 303099) (Mesorhizobium loti (strain MAFF 303099)).